The following is a 1655-amino-acid chain: Protein scribble homolog (1655 aa).

The tract at residues 1-818 is sufficient for targeting to adherens junction and to inhibit cell proliferation; the sequence is MLKCIPLWRC…MRVWRERMVE (818 aa). The residue at position 37 (Ser-37) is a Phosphoserine. LRR repeat units follow at residues 37 to 58, 60 to 81, 83 to 104, 106 to 127, 129 to 150, 152 to 174, 175 to 197, 198 to 219, 221 to 243, 244 to 265, 267 to 288, 290 to 312, 313 to 334, 336 to 357, 359 to 381, and 382 to 402; these read SLEELLLDANQLRELPKPFFRL, NLRKLGLSDNEIQRLPPEVANF, QLVELDVSRNDIPEIPESIKFC, ALEIADFSGNPLSRLPDGFTQL, SLAHLALNDVSLQALPGDVGNL, NLVTLELRENLLKSLPASLSFLV, KLEQLDLGGNDLEVLPDTLGALP, NLRELWLDRNQLSALPPELGNL, RLVCLDVSENRLEELPAELGGLV, LLTDLLLSQNLLRRLPDGIGQL, QLSILKVDQNRLCEVTEAIGDC, NLSELILTENLLMALPRSLGKLT, KLTNLNVDRNHLEALPPEIGGC, ALSVLSLRDNRLAVLPPELAHT, ELHVLDVAGNRLQSLPFALTHLN, and LKALWLAENQAQPMLRFQTED. At Thr-378 the chain carries Phosphothreonine. 3 disordered regions span residues 417–440, 459–606, and 628–702; these read PQQPPPSLEDAGQQGSLSETWSDA, DAEE…IRKD, and LLQG…VSAP. The stretch at 458 to 474 forms a coiled coil; the sequence is EDAEEAAAEKRGLQRRA. Thr-475 carries the phosphothreonine modification. Residues 479–494 are compositionally biased toward basic and acidic residues; sequence SELKVMKRSIEGRRSE. Ser-504 carries the post-translational modification Phosphoserine. The span at 537 to 555 shows a compositional bias: low complexity; sequence EGPSAEAQGGSQQEATTAG. Composition is skewed to acidic residues over residues 556–565 and 660–694; these read GEEDAEEDYQ and EEEEEEEGSPQEEEEEEEEENRAEEEEASTEEEDK. Residues 656–701 are a coiled coil; it reads RAQKEEEEEEEGSPQEEEEEEEEENRAEEEEASTEEEDKEGAVVSA. At Ser-688 the chain carries Phosphoserine. Thr-689 carries the post-translational modification Phosphothreonine. Phosphoserine is present on residues Ser-708 and Ser-764. Residues 717–1229 are interaction with ARHGEF7; sequence IEPARIEEEE…SLESISSIDR (513 aa). The PDZ 1 domain occupies 728 to 815; the sequence is TLTILRQTGG…AVQMRVWRER (88 aa). Residues 728–1194 are required for interaction with VIM; that stretch reads TLTILRQTGG…TVLVCDGFEA (467 aa). A Phosphothreonine modification is found at Thr-826. A disordered region spans residues 827-853; that stretch reads PLRPEDDYSPRERRGGGLRLPLLPPES. Basic and acidic residues predominate over residues 829–841; it reads RPEDDYSPRERRG. Phosphoserine is present on residues Ser-835, Ser-853, Ser-875, and Ser-939. PDZ domains are found at residues 862–950, 1004–1093, and 1100–1194; these read VACL…EREA, EIRL…RRDP, and ELCI…GFEA. Positions 1105-1117 are interaction with tick-borne encephalitis virus RNA-directed RNA polymerase NS5; the sequence is KAPGERLGISIRG. Ser-1140, Ser-1220, Ser-1223, Ser-1226, Ser-1232, Ser-1276, Ser-1279, Ser-1295, Ser-1298, Ser-1306, and Ser-1309 each carry phosphoserine. Residues 1227–1242 show a composition bias toward basic and acidic residues; the sequence is IDRELSPEGPGKEKEL. The disordered stretch occupies residues 1227 to 1246; it reads IDRELSPEGPGKEKELPGQT. The segment at 1277-1489 is disordered; sequence AGSVQRVPSG…APERALSPAE (213 aa). The segment covering 1302 to 1311 has biased composition (pro residues); that stretch reads QQPPSPPSPD. Thr-1342 is subject to Phosphothreonine. Residue Ser-1348 is modified to Phosphoserine. Residues 1353–1365 are compositionally biased toward basic and acidic residues; sequence SFRERQKYFELEV. Ser-1378 bears the Phosphoserine mark. The stretch at 1379-1419 forms a coiled coil; the sequence is LVGADDLRKMQEEEARKLQQKRAQMLREAAEAGAEARLALD. Residues 1383 to 1395 are compositionally biased toward basic and acidic residues; sequence DDLRKMQEEEARK. The segment covering 1409–1421 has biased composition (low complexity); it reads EAGAEARLALDGE. Residues 1422 to 1432 are compositionally biased toward acidic residues; it reads TLGEEEQEDEQ. Residues Ser-1437, Ser-1445, and Ser-1448 each carry the phosphoserine modification. The segment covering 1461-1472 has biased composition (basic and acidic residues); that stretch reads AKAERRHQERLR. Phosphoserine occurs at positions 1475, 1486, and 1508. The segment at 1520 to 1568 is disordered; it reads LSRSQEGRGTRGPLERLAEAPSPAPTPSPTPVEDLGPQTSTSPGRLPLS. Residues 1524–1537 are compositionally biased toward basic and acidic residues; the sequence is QEGRGTRGPLERLA. Ser-1541 carries the post-translational modification Phosphoserine. The residue at position 1545 (Thr-1545) is a Phosphothreonine. A phosphoserine mark is found at Ser-1547, Ser-1561, and Ser-1591. The disordered stretch occupies residues 1622–1655; it reads GRPSPGAVGPEDVALCSSRRPVRPGRRGLGPVPS.

This sequence belongs to the LAP (LRR and PDZ) protein family. In terms of assembly, interacts with UBE3A. Interacts with PAK1 and PAK2. Interacts (via PDZ domains) with VANGL2. Interacts (via PDZ domains) with LPP and TRIP6; the interaction is direct. Interacts (via PDZ domains) with TJP2. Interacts (via PDZ domains) with APC; may mediate APC targeting to adherens junctions of epithelial cells. Interacts (via PDZ domains) with TSHR; regulates TSHR trafficking and function. Interacts with ARHGEF7 and GIT1; interacts directly with ARHGEF7. Interacts with CTNNB1. Interacts with MAPK12. Interacts (via PDZ domains 1 and 3) with MCC. Interacts with DLG5. Interacts with STK4/MST1 and LATS1 in the presence of DLG5. Interacts (via PDZ domain 3) with CRTAM (via PDZ-binding motif); the interaction promotes CRTAM and SCRIB polarization in a subset of CD4+ T-cells. Interacts with YES1, when YES1 is in a closed conformation; the interaction facilitates YES1 autophosphorylation. Interacts (via PDZ domains) with VIM; the interaction protects SCRIB from proteasomal degradation and facilitates SCRIB localization to intermediate filaments, the interaction is reduced by cell contact inhibition. As to quaternary structure, (Microbial infection) Interacts (via fourth PDZ domain) with tick-borne encephalitis virus RNA-directed RNA polymerase NS5; this interaction targets viral NS5 to the cell membrane periphery and nucleus and prevents STAT1 phosphorylation, and thus, the activation of the JAK-STAT signaling pathway. Interacts with HPV E6. Interacts with influenza A virus protein NS1; the interaction results in the translocation of SCRIB from the cell membrane to perinuclear puncta. In terms of processing, ubiquitinated; targeted for UBE3A-dependent multiubiquitination in the presence of high-risk HPV E6 proteins and degraded. Post-translationally, palmitoylated. Could be depalmitoylated by LYPLA1 and/or LYPLA2. Palmitoylation of SCRIB by ZDHHC7 is required for its localization to cell-cell junctions, function in the establishement of epithelial cell polarity and the regulation of downstream signaling pathways important for epithelial cell differentiation. As to expression, expressed in kidney, skeletal muscles, liver, lung, breast, intestine, placenta and skin mainly in epithelial cells (at protein level).

The protein localises to the cell membrane. It localises to the cell junction. It is found in the adherens junction. The protein resides in the cell projection. Its subcellular location is the lamellipodium. The protein localises to the cytoplasm. It localises to the postsynapse. It is found in the presynapse. Its function is as follows. Scaffold protein involved in different aspects of polarized cell differentiation regulating epithelial and neuronal morphogenesis and T-cell polarization. Via its interaction with CRTAM, required for the late phase polarization of a subset of CD4+ T-cells, which in turn regulates TCR-mediated proliferation and IFNG and IL22 production. Plays a role in cell directional movement, cell orientation, cell sheet organization and Golgi complex polarization at the cell migration front. Promotes epithelial cell layer barrier function via maintaining cell-cell adhesion. Most probably functions in the establishment of apico-basal cell polarity. May function in cell proliferation regulating progression from G1 to S phase and as a positive regulator of apoptosis for instance during acinar morphogenesis of the mammary epithelium. May regulate cell invasion via MAPK-mediated cell migration and adhesion. May play a role in exocytosis and in the targeting of synaptic vesicles to synapses. Functions as an activator of Rac GTPase activity. The sequence is that of Protein scribble homolog from Homo sapiens (Human).